Consider the following 107-residue polypeptide: Thioredoxin (107 aa).

A Thioredoxin domain is found at 2–107 (SATPQVSDAS…TLASTLEKYL (106 aa)). An intrachain disulfide couples Cys-32 to Cys-35.

It belongs to the thioredoxin family.

Its function is as follows. Component of the thioredoxin-thioredoxin reductase system. Participates in various redox reactions through the reversible oxidation of its active center dithiol to a disulfide and catalyzes dithiol-disulfide exchange reactions. This chain is Thioredoxin (trxA), found in Synechocystis sp. (strain ATCC 27184 / PCC 6803 / Kazusa).